We begin with the raw amino-acid sequence, 178 residues long: uncharacterized protein (178 aa).

The interval 1–89 (MSAKEGSSHP…GEKKGKTEKL (89 aa)) is disordered. Composition is skewed to basic and acidic residues over residues 44 to 53 (PYQKNEKVVV) and 61 to 89 (AFLH…TEKL).

This is an uncharacterized protein from Schizosaccharomyces pombe (strain 972 / ATCC 24843) (Fission yeast).